The primary structure comprises 302 residues: uncharacterized protein (302 aa).

The first 52 residues, 1-52, serve as a signal peptide directing secretion; sequence MLKKLKVVRLLVNHLIYCPSIFMPYSKNMKKKIWNKTSLGALFMLFGTALTA.

The protein belongs to the MG439/MG440 family.

This is an uncharacterized protein from Mycoplasma pneumoniae (strain ATCC 29342 / M129 / Subtype 1) (Mycoplasmoides pneumoniae).